The primary structure comprises 215 residues: Triosephosphate isomerase (215 aa).

Catalysis depends on histidine 82, which acts as the Electrophile. Glutamate 153 acts as the Proton acceptor in catalysis.

This sequence belongs to the triosephosphate isomerase family. As to quaternary structure, homodimer.

The enzyme catalyses D-glyceraldehyde 3-phosphate = dihydroxyacetone phosphate. Its pathway is carbohydrate biosynthesis; gluconeogenesis. It participates in carbohydrate degradation; glycolysis; D-glyceraldehyde 3-phosphate from glycerone phosphate: step 1/1. The sequence is that of Triosephosphate isomerase (Tpi) from Heliothis virescens (Tobacco budworm moth).